Reading from the N-terminus, the 96-residue chain is Cytoplasmic envelopment protein 3 (96 aa).

A lipid anchor (N-myristoyl glycine; by host) is attached at G2. The interval 37–43 is asp/Glu-rich (acidic); sequence DIESEEE. S40 bears the Phosphoserine mark. The disordered stretch occupies residues 50-96; the sequence is PDVRVVTRAPGPQYRRPSDPPSRHTRRRDPDVARPPATLTPPLSDSE. Residues 65-81 are compositionally biased toward basic and acidic residues; sequence RPSDPPSRHTRRRDPDV.

It belongs to the herpesviridae cytoplasmic envelopment protein 3 family. Interacts with cytoplasmic envelopment protein 2; this interaction is essential for the proper localization of each protein to the assembly complex and thus for the production of infectious virus. Interacts with gE (via C-terminus). Interacts with gD (via C-terminus). Interacts with UL56. In terms of processing, myristoylation and palmitoylation (probably on one or more of the nearby cysteines at the N-terminus) enable membrane-binding and Golgi apparatus-specific targeting and are essential for efficient packaging. Phosphorylated. Phosphorylation does not seem to be required for recycling to the host Golgi apparatus. Packaging is selective for underphosphorylated forms.

Its subcellular location is the virion tegument. It localises to the virion membrane. The protein localises to the host cell membrane. The protein resides in the host Golgi apparatus membrane. Plays an important role in the cytoplasmic envelopment of tegument proteins and capsids during the assembly and egress processes. Also participates in viral entry at the fusion step probably by regulating the core fusion machinery. The chain is Cytoplasmic envelopment protein 3 from Homo sapiens (Human).